The sequence spans 563 residues: Serine/threonine-protein kinase WNK8 (563 aa).

The region spanning 29–286 (IRYDDVLGRG…ALELSKDPFL (258 aa)) is the Protein kinase domain. ATP is bound by residues 109–112 (TELF) and Lys-159. Asp-176 (proton acceptor) is an active-site residue. Polar residues predominate over residues 426 to 436 (TSSHHNQNSPR). The disordered stretch occupies residues 426-459 (TSSHHNQNSPRLTHEDHEAANQQTVNSKDEEAAG). Ser-509 carries the phosphoserine modification.

This sequence belongs to the protein kinase superfamily. Ser/Thr protein kinase family. WNK subfamily. In terms of assembly, interacts with RGS1 and GB1, but not with GPA1. The association with RGS1 at the plasma membrane is triggered by induction of glucose. Binds to EDM2 in nucleus. Autophosphorylated.

It localises to the nucleus. It catalyses the reaction L-seryl-[protein] + ATP = O-phospho-L-seryl-[protein] + ADP + H(+). The enzyme catalyses L-threonyl-[protein] + ATP = O-phospho-L-threonyl-[protein] + ADP + H(+). In terms of biological role, regulates flowering time by modulating the photoperiod pathway. Phosphorylates the vacuolar ATPase subunit C (VATC) and RGS1. Regulates EDM2 that, in turn, modulates development processes. The sequence is that of Serine/threonine-protein kinase WNK8 (WNK8) from Arabidopsis thaliana (Mouse-ear cress).